A 496-amino-acid chain; its full sequence is Glutamyl-tRNA(Gln) amidotransferase subunit A (496 aa).

Catalysis depends on charge relay system residues K75 and S150. S174 functions as the Acyl-ester intermediate in the catalytic mechanism.

It belongs to the amidase family. GatA subfamily. In terms of assembly, heterotrimer of A, B and C subunits.

It carries out the reaction L-glutamyl-tRNA(Gln) + L-glutamine + ATP + H2O = L-glutaminyl-tRNA(Gln) + L-glutamate + ADP + phosphate + H(+). Its function is as follows. Allows the formation of correctly charged Gln-tRNA(Gln) through the transamidation of misacylated Glu-tRNA(Gln) in organisms which lack glutaminyl-tRNA synthetase. The reaction takes place in the presence of glutamine and ATP through an activated gamma-phospho-Glu-tRNA(Gln). The polypeptide is Glutamyl-tRNA(Gln) amidotransferase subunit A (Burkholderia ambifaria (strain ATCC BAA-244 / DSM 16087 / CCUG 44356 / LMG 19182 / AMMD) (Burkholderia cepacia (strain AMMD))).